The chain runs to 865 residues: Xylosyltransferase 2 (865 aa).

Over 1 to 15 (MVASARVQKLVRRYK) the chain is Cytoplasmic. Residues 16 to 36 (LAIATALAILLLQGLVVWSFS) traverse the membrane as a helical; Signal-anchor for type II membrane protein segment. Residues 37–865 (GLEEDEPGEK…GPVKADGRLR (829 aa)) are Lumenal-facing. Residues 39-157 (EEDEPGEKGR…EGAPQPTDNG (119 aa)) form a disordered region. A compositionally biased stretch (basic and acidic residues) spans 53 to 65 (RPLDPGEGSKDTD). Over residues 73–82 (SAGRRHGRWR) the composition is skewed to basic residues. Asparagine 122 is a glycosylation site (N-linked (GlcNAc...) asparagine). Over residues 125-137 (GAAAGEALVGAAG) the composition is skewed to low complexity. Disulfide bonds link cysteine 162–cysteine 190, cysteine 206–cysteine 448, cysteine 467–cysteine 480, and cysteine 469–cysteine 478. UDP-alpha-D-xylose is bound by residues valine 239, aspartate 267, and 296–298 (TIW). An N-linked (GlcNAc...) asparagine glycan is attached at asparagine 327. UDP-alpha-D-xylose is bound at residue 400–401 (DW). UDP-alpha-D-xylose is bound by residues serine 481 and 504-505 (RK). Disulfide bonds link cysteine 581–cysteine 833 and cysteine 826–cysteine 839. Asparagine 683 is a glycosylation site (N-linked (GlcNAc...) asparagine).

Belongs to the glycosyltransferase 14 family. XylT subfamily. Monomer. Mg(2+) is required as a cofactor. The cofactor is Mn(2+). Post-translationally, contains disulfide bonds.

The protein localises to the golgi apparatus membrane. Its subcellular location is the secreted. It carries out the reaction UDP-alpha-D-xylose + L-seryl-[protein] = 3-O-(beta-D-xylosyl)-L-seryl-[protein] + UDP + H(+). Its pathway is glycan metabolism; chondroitin sulfate biosynthesis. The protein operates within glycan metabolism; heparan sulfate biosynthesis. Functionally, catalyzes the first step in the biosynthesis of chondroitin sulfate, heparan sulfate and dermatan sulfate proteoglycans, such as DCN. Transfers D-xylose from UDP-D-xylose to specific serine residues of the core protein. The sequence is that of Xylosyltransferase 2 (XYLT2) from Canis lupus familiaris (Dog).